The following is a 377-amino-acid chain: MFNPHALDSPAVIFDNGSGLCKAGLSGEFGPRHIVSSIVGHLKFQAPSAGANQKKYFVGEEALYKLEALQLHSPIERGLITGWDDMERLWKHLFEWELGVKPSDQPLLATEPSLNPRENREKMAEVMFENFGVPAFYLSDQAVLALYASACVTGLVVDSGDGVTCTVPIFEGYSLPHAVTKLHVAGRDITELLTQLLLASGHTFSCELDKGLVDDIKKKLCYVALEPEKELSRRPEEVLREYKLPDGNIISLGDPLCQAPEALFAPQQLGCQSPGLSHMVSSSITKCDADIQKILFGEIVLSGGTTLFHGLDDRLLKELEQLASKDTPIKITAPPDRWFSTWIGASIVTSLSSFKQMWVTAADFKEFGSSVVQRRCF.

Belongs to the actin family.

Its subcellular location is the cytoplasm. The protein resides in the cytoskeleton. The sequence is that of Actin-related protein T2 (ACTRT2) from Macaca fascicularis (Crab-eating macaque).